The primary structure comprises 168 residues: Heat shock protein beta-9 (168 aa).

Residues 1–12 (MQRVGSSFSTGQ) show a composition bias toward polar residues. 3 disordered regions span residues 1–25 (MQRV…SRCP), 83–104 (TGQR…EQSV), and 129–168 (LWLR…VKNP). In terms of domain architecture, sHSP spans 38–151 (LPVRLLRDEV…EAQTGQSQKP (114 aa)). A compositionally biased stretch (basic and acidic residues) spans 86–104 (RQHESNDPSRGRYRMEQSV). Polar residues predominate over residues 158–168 (SSLQNESVKNP).

It belongs to the small heat shock protein (HSP20) family. In terms of tissue distribution, testis specific.

It is found in the cytoplasm. Its subcellular location is the nucleus. This chain is Heat shock protein beta-9 (Hspb9), found in Mus musculus (Mouse).